The sequence spans 116 residues: U3-theraphotoxin-Lsp1a (116 aa).

Positions 1 to 17 are cleaved as a signal peptide; the sequence is MKLSTFIIMISLAVALA. Residues 18–50 constitute a propeptide that is removed on maturation; sequence TWPSEHIEGSDSETKLNVELGPYALADRAEKGK.

Belongs to the neurotoxin 25 family. F7 subfamily. In terms of processing, contains 3 disulfide bonds. As to expression, expressed by the venom gland.

It is found in the secreted. The chain is U3-theraphotoxin-Lsp1a from Lasiodora sp. (strain IBSP 8539) (Brazilian salmon pink birdeater).